We begin with the raw amino-acid sequence, 162 residues long: ATP synthase subunit b 1 (162 aa).

A helical transmembrane segment spans residues 3–23 (FLDATFFAFVGLVLFLALVVY).

This sequence belongs to the ATPase B chain family. As to quaternary structure, F-type ATPases have 2 components, F(1) - the catalytic core - and F(0) - the membrane proton channel. F(1) has five subunits: alpha(3), beta(3), gamma(1), delta(1), epsilon(1). F(0) has three main subunits: a(1), b(2) and c(10-14). The alpha and beta chains form an alternating ring which encloses part of the gamma chain. F(1) is attached to F(0) by a central stalk formed by the gamma and epsilon chains, while a peripheral stalk is formed by the delta and b chains.

The protein resides in the cell inner membrane. In terms of biological role, f(1)F(0) ATP synthase produces ATP from ADP in the presence of a proton or sodium gradient. F-type ATPases consist of two structural domains, F(1) containing the extramembraneous catalytic core and F(0) containing the membrane proton channel, linked together by a central stalk and a peripheral stalk. During catalysis, ATP synthesis in the catalytic domain of F(1) is coupled via a rotary mechanism of the central stalk subunits to proton translocation. Functionally, component of the F(0) channel, it forms part of the peripheral stalk, linking F(1) to F(0). The polypeptide is ATP synthase subunit b 1 (Rhizobium johnstonii (strain DSM 114642 / LMG 32736 / 3841) (Rhizobium leguminosarum bv. viciae)).